The chain runs to 182 residues: MPVRPARCYRRIKGPPYTREEYIHGAPMIQIPKFDMGTTSAAARATFPMVAKLIVEERGQIRMQALEAARQMASKYLTKYVGDANYYLRLNVIPHHVLRENRMLAMAGADRLQEGMRLAFGSPAGRAARVEPGQILFYAEFKPEHLAHIKEAFRRAASKLPLPTRIVIEPKGDGDGKTATQG.

Belongs to the universal ribosomal protein uL16 family.

The chain is Large ribosomal subunit protein uL16 from Pyrobaculum arsenaticum (strain DSM 13514 / JCM 11321 / PZ6).